The primary structure comprises 240 residues: Splicing factor rtf2 (240 aa).

2 disordered regions span residues Met1 to Pro22 and Ser181 to Ile240. Positions Ala185 to His210 are enriched in basic residues. Basic and acidic residues-rich tracts occupy residues Glu211–Lys224 and Asp231–Ile240.

The protein belongs to the rtf2 family. As to quaternary structure, interacts with pcn1.

The protein localises to the nucleus. Putative splicing factor that is required for the correct splicing of a subset of pre-mRNAs. Required for the correct splicing of rtf1, a replication termination factor that mediates site-specific replication termination at replication barrier RTS1. This Schizosaccharomyces pombe (strain 972 / ATCC 24843) (Fission yeast) protein is Splicing factor rtf2.